Consider the following 264-residue polypeptide: MALASVLQRPMPVNQHGFFGLGGGADLLDLGPGSPGDGLSLAAPSWGVPEEPRIEMLHGTTTLAFKFLHGVIVAADSRATAGAYIASQTVKKVIEINPYLLGTMAGGAADCSFWERLLARQCRIYELRNKERISVAAASKLLANMVYQYKGMGLSMGTMICGWDKRGPGLYYVDSEGNRISGTAFSVGSGSVYAYGVMDRGYSYDLKVEEAYDLARRAIYQATYRDAYSGGAVNLYHVREDGWIRVSSDNVADLHDKYSSVSVP.

The propeptide at M1 to G59 is removed in mature form. The active-site Nucleophile is the T60. Residue A108 participates in bortezomib binding.

Belongs to the peptidase T1B family. As to quaternary structure, the 26S proteasome consists of a 20S proteasome core and two 19S regulatory subunits. The 20S proteasome core is a barrel-shaped complex made of 28 subunits that are arranged in four stacked rings. The two outer rings are each formed by seven alpha subunits, and the two inner rings are formed by seven beta subunits. The proteolytic activity is exerted by three beta-subunits PSMB5, PSMB6 and PSMB7. Directly interacts with POMP. Interacts with ABCB1 and TAP1. Expressed in uterus at the embryo implantation site.

It is found in the cytoplasm. The protein resides in the nucleus. The enzyme catalyses Cleavage of peptide bonds with very broad specificity.. Its function is as follows. Component of the 20S core proteasome complex involved in the proteolytic degradation of most intracellular proteins. This complex plays numerous essential roles within the cell by associating with different regulatory particles. Associated with two 19S regulatory particles, forms the 26S proteasome and thus participates in the ATP-dependent degradation of ubiquitinated proteins. The 26S proteasome plays a key role in the maintenance of protein homeostasis by removing misfolded or damaged proteins that could impair cellular functions, and by removing proteins whose functions are no longer required. Associated with the PA200 or PA28, the 20S proteasome mediates ubiquitin-independent protein degradation. This type of proteolysis is required in several pathways including spermatogenesis (20S-PA200 complex) or generation of a subset of MHC class I-presented antigenic peptides (20S-PA28 complex). Within the 20S core complex, PSMB5 displays a chymotrypsin-like activity. The protein is Proteasome subunit beta type-5 (Psmb5) of Mus musculus (Mouse).